We begin with the raw amino-acid sequence, 25 residues long: Omega-conotoxin MVIIB (25 aa).

Cystine bridges form between C1–C16, C8–C20, and C15–C25. A Cysteine amide modification is found at C25.

It belongs to the conotoxin O1 superfamily. Expressed by the venom duct.

It localises to the secreted. Functionally, omega-conotoxins act at presynaptic membranes, they bind and block voltage-gated calcium channels (Cav). This chain is Omega-conotoxin MVIIB, found in Conus magus (Magical cone).